A 699-amino-acid polypeptide reads, in one-letter code: Probable xyloglucan glycosyltransferase 12 (699 aa).

2 helical membrane-spanning segments follow: residues 126 to 146 and 194 to 214; these read CLKV…AAYF and IVLF…CFWI. The active site involves Asp-280. The substrate site is built by Asp-339 and Asp-341. Asp-433 is an active-site residue. Helical transmembrane passes span 511–531 and 536–556; these read LILP…TMFV and LPAW…ILPA. Residues 616–646 are disordered; that stretch reads EKTTKHQRGVSAPETEAEKKAEKTKRKKKKH. Glycyl lysine isopeptide (Lys-Gly) (interchain with G-Cter in ubiquitin) cross-links involve residues Lys-617 and Lys-620. A Phosphoserine modification is found at Ser-626. Over residues 637 to 646 the composition is skewed to basic residues; the sequence is EKTKRKKKKH. The next 2 helical transmembrane spans lie at 649-668 and 674-694; these read IYMK…TRSL and IHFY…LDLI.

The protein belongs to the glycosyltransferase 2 family. Plant cellulose synthase-like C subfamily. Homodimer. In terms of tissue distribution, mainly expressed in roots, flowers and seeds, and, at very low levels, in seedlings, leaves and stems.

The protein resides in the golgi apparatus membrane. Probable beta-1,4-glucan synthase rather involved in the synthesis of the xyloglucan backbone than cellulose. Seems to work simultaneously with xyloglucan 6-xylosyltransferase. Xyloglucan is a noncellulosic polysaccharides of plant cell wall and consists of a glucan backbone substituted by xylose, galactose and fucose. The sequence is that of Probable xyloglucan glycosyltransferase 12 from Arabidopsis thaliana (Mouse-ear cress).